Consider the following 91-residue polypeptide: Small ribosomal subunit protein bS16 (91 aa).

This sequence belongs to the bacterial ribosomal protein bS16 family.

The protein is Small ribosomal subunit protein bS16 of Limosilactobacillus fermentum (strain NBRC 3956 / LMG 18251) (Lactobacillus fermentum).